Consider the following 323-residue polypeptide: Phosphate acetyltransferase (323 aa).

It belongs to the phosphate acetyltransferase and butyryltransferase family.

It is found in the cytoplasm. The catalysed reaction is acetyl-CoA + phosphate = acetyl phosphate + CoA. It functions in the pathway metabolic intermediate biosynthesis; acetyl-CoA biosynthesis; acetyl-CoA from acetate: step 2/2. This Bacillus subtilis (strain 168) protein is Phosphate acetyltransferase (pta).